The following is a 360-amino-acid chain: Endolytic peptidoglycan transglycosylase RlpA (360 aa).

An N-terminal signal peptide occupies residues 1–17; sequence MRKEWLWVGIASVLLSA. Cys18 carries N-palmitoyl cysteine lipidation. Residue Cys18 is the site of S-diacylglycerol cysteine attachment. Positions 283–359 constitute an SPOR domain; the sequence is SAISGGYVVQ…AQQQSFIVAA (77 aa).

It belongs to the RlpA family.

Its subcellular location is the cell membrane. Lytic transglycosylase with a strong preference for naked glycan strands that lack stem peptides. This is Endolytic peptidoglycan transglycosylase RlpA from Yersinia pestis.